A 380-amino-acid polypeptide reads, in one-letter code: Crotonobetainyl-CoA reductase (380 aa).

It belongs to the acyl-CoA dehydrogenase family. As to quaternary structure, homotetramer. FAD is required as a cofactor.

Its subcellular location is the cytoplasm. It catalyses the reaction 4-(trimethylamino)butanoyl-CoA + oxidized [electron-transfer flavoprotein] + H(+) = crotonobetainyl-CoA + reduced [electron-transfer flavoprotein]. It participates in amine and polyamine metabolism; carnitine metabolism. Catalyzes the reduction of crotonobetainyl-CoA to gamma-butyrobetainyl-CoA. The polypeptide is Crotonobetainyl-CoA reductase (Salmonella agona (strain SL483)).